Here is a 1014-residue protein sequence, read N- to C-terminus: Collagen alpha-1(I) chain (1014 aa).

A disordered region spans residues 1 to 1014 (SYGYDEKGGI…PGPPGPPGPP (1014 aa)). Residues 9-22 (GISVPGPMGPSGPR) show a composition bias toward low complexity. 4-hydroxyproline is present on residues Pro25, Pro28, Pro30, Pro39, Pro42, Pro45, Pro60, Pro75, Pro81, Pro90, and Pro96. A compositionally biased stretch (low complexity) spans 33–51 (QGFQGPPGEPGEPGSSGPM). The span at 63-77 (NGDDGEAGKPGRPGE) shows a compositional bias: basic and acidic residues. The residue at position 99 (Lys99) is a 5-hydroxylysine; alternate. Lys99 carries an O-linked (Gal...) hydroxylysine; alternate glycan. The residue at position 105 (Ser105) is a Phosphoserine. Positions 113-129 (DAGPAGPKGEPGSPGEN) are enriched in low complexity. Residues Pro123, Pro126, Pro132, Pro141, Pro147, Pro168, Pro177, Pro180, Pro207, Pro210, Pro222, Pro228, Pro237, Pro243, Pro246, and Pro261 each carry the 4-hydroxyproline modification. Positions 147 to 165 (PGASGPAGARGNDGATGAA) are enriched in low complexity. Over residues 167–179 (PPGPTGPAGPPGF) the composition is skewed to pro residues. The segment covering 213–252 (AGAAGPAGNPGADGQPGAKGANGAPGIAGAPGFPGARGPS) has biased composition (low complexity). Lys264 is subject to 5-hydroxylysine. A 4-hydroxyproline mark is found at Pro270, Pro273, Pro285, Pro294, Pro309, Pro315, Pro324, and Pro330. A compositionally biased stretch (gly residues) spans 319 to 328 (GERGGPGSRG). The residue at position 339 (Lys339) is a 5-hydroxylysine. 26 positions are modified to 4-hydroxyproline: Pro348, Pro357, Pro363, Pro369, Pro378, Pro381, Pro390, Pro399, Pro405, Pro417, Pro426, Pro435, Pro438, Pro456, Pro473, Pro479, Pro485, Pro491, Pro497, Pro503, Pro515, Pro524, Pro535, Pro548, Pro554, and Pro563. Low complexity predominate over residues 372-398 (KGLTGSPGSPGPDGKTGPPGPAGQDGR). A compositionally biased stretch (low complexity) spans 407–426 (ARGQAGVMGFPGPKGAAGEP). The span at 485–494 (PGEAGKPGEQ) shows a compositional bias: low complexity. Position 575 is a 5-hydroxylysine (Lys575). 4-hydroxyproline is present on residues Pro581, Pro596, and Pro602. Positions 608-622 (SGPSGPAGPTGARGA) are enriched in low complexity. At Ser611 the chain carries Phosphoserine. 4-hydroxyproline occurs at positions 623, 629, 632, 641, 647, 674, and 683. Residues 635 to 665 (AGFAGPPGADGQPGAKGEPGDAGAKGDAGPS) show a composition bias toward low complexity. Lys686 is subject to 5-hydroxylysine. Low complexity predominate over residues 691 to 707 (SAGPPGATGFPGAAGRV). 4-hydroxyproline occurs at positions 695 and 701. 3-hydroxyproline is present on Pro709. A 4-hydroxyproline mark is found at Pro710, Pro719, Pro722, Pro743, Pro752, Pro760, Pro769, Pro787, Pro796, Pro799, Pro805, Pro820, Pro826, Pro832, Pro841, and Pro847. The segment covering 736 to 745 (ETGPAGRPGE) has biased composition (low complexity). Low complexity predominate over residues 757-769 (KGSPGADGPAGAP). Over residues 819 to 829 (PPGPVGPPGLA) the composition is skewed to pro residues. Lys856 is subject to 5-hydroxylysine. Residues 864 to 879 (PGPPGAPGAPGAPGPV) show a composition bias toward pro residues. 4-hydroxyproline is present on residues Pro867, Pro870, and Pro873. Positions 900–914 (AGPAGARGPAGPQGP) are enriched in low complexity. Over residues 915 to 929 (RGDKGETGEQGDRGI) the composition is skewed to basic and acidic residues. Lys918 carries the post-translational modification 5-hydroxylysine. Lys930 carries the 5-hydroxylysine; alternate modification. Lys930 is a glycosylation site (O-linked (Gal...) hydroxylysine; alternate). 4 positions are modified to 4-hydroxyproline: Pro945, Pro948, Pro966, and Pro981. Residues 948–981 (PGEQGPSGASGPAGPRGPPGSAGSPGKDGLNGLP) are compositionally biased toward low complexity. Pro986 bears the 3-hydroxyproline mark. The residue at position 987 (Pro987) is a 4-hydroxyproline. Pro residues predominate over residues 999 to 1014 (VGPPGPPGPPGPPGPP). Pro1001 carries the 3-hydroxyproline modification. Pro1002 carries the post-translational modification 4-hydroxyproline. Pro1004 is subject to 3-hydroxyproline. Pro1005 bears the 4-hydroxyproline mark. The residue at position 1007 (Pro1007) is a 3-hydroxyproline. 3 positions are modified to 4-hydroxyproline: Pro1008, Pro1011, and Pro1014.

The protein belongs to the fibrillar collagen family. Trimers of one alpha 2(I) and two alpha 1(I) chains. Post-translationally, contains mostly 4-hydroxyproline. Proline residues at the third position of the tripeptide repeating unit (G-X-Y) are hydroxylated in some or all of the chains. In terms of processing, contains 3-hydroxyproline at a few sites. This modification occurs on the first proline residue in the sequence motif Gly-Pro-Hyp, where Hyp is 4-hydroxyproline. Lysine residues at the third position of the tripeptide repeating unit (G-X-Y) are 5-hydroxylated in some or all of the chains. Post-translationally, O-glycosylated on hydroxylated lysine residues. The O-linked glycan consists of a Glc-Gal disaccharide. Expressed in bones.

It is found in the secreted. The protein resides in the extracellular space. It localises to the extracellular matrix. Its function is as follows. Type I collagen is a member of group I collagen (fibrillar forming collagen). This is Collagen alpha-1(I) chain from Megatherium americanum (Giant ground sloth).